Here is a 125-residue protein sequence, read N- to C-terminus: Large ribosomal subunit protein bL12 (125 aa).

Belongs to the bacterial ribosomal protein bL12 family. Homodimer. Part of the ribosomal stalk of the 50S ribosomal subunit. Forms a multimeric L10(L12)X complex, where L10 forms an elongated spine to which 2 to 4 L12 dimers bind in a sequential fashion. Binds GTP-bound translation factors.

Forms part of the ribosomal stalk which helps the ribosome interact with GTP-bound translation factors. Is thus essential for accurate translation. The chain is Large ribosomal subunit protein bL12 from Bradyrhizobium sp. (strain BTAi1 / ATCC BAA-1182).